The following is a 234-amino-acid chain: Thiamine-phosphate synthase (234 aa).

Residues 65–69 (QYRNK) and asparagine 97 contribute to the 4-amino-2-methyl-5-(diphosphooxymethyl)pyrimidine site. Mg(2+) contacts are provided by aspartate 98 and aspartate 117. Serine 136 is a 4-amino-2-methyl-5-(diphosphooxymethyl)pyrimidine binding site. 163–165 (SHT) is a 2-[(2R,5Z)-2-carboxy-4-methylthiazol-5(2H)-ylidene]ethyl phosphate binding site. Residue lysine 166 coordinates 4-amino-2-methyl-5-(diphosphooxymethyl)pyrimidine. 2-[(2R,5Z)-2-carboxy-4-methylthiazol-5(2H)-ylidene]ethyl phosphate contacts are provided by residues glycine 192 and 212–213 (IS).

This sequence belongs to the thiamine-phosphate synthase family. Mg(2+) is required as a cofactor.

The enzyme catalyses 2-[(2R,5Z)-2-carboxy-4-methylthiazol-5(2H)-ylidene]ethyl phosphate + 4-amino-2-methyl-5-(diphosphooxymethyl)pyrimidine + 2 H(+) = thiamine phosphate + CO2 + diphosphate. It catalyses the reaction 2-(2-carboxy-4-methylthiazol-5-yl)ethyl phosphate + 4-amino-2-methyl-5-(diphosphooxymethyl)pyrimidine + 2 H(+) = thiamine phosphate + CO2 + diphosphate. It carries out the reaction 4-methyl-5-(2-phosphooxyethyl)-thiazole + 4-amino-2-methyl-5-(diphosphooxymethyl)pyrimidine + H(+) = thiamine phosphate + diphosphate. Its pathway is cofactor biosynthesis; thiamine diphosphate biosynthesis; thiamine phosphate from 4-amino-2-methyl-5-diphosphomethylpyrimidine and 4-methyl-5-(2-phosphoethyl)-thiazole: step 1/1. In terms of biological role, condenses 4-methyl-5-(beta-hydroxyethyl)thiazole monophosphate (THZ-P) and 2-methyl-4-amino-5-hydroxymethyl pyrimidine pyrophosphate (HMP-PP) to form thiamine monophosphate (TMP). This chain is Thiamine-phosphate synthase, found in Xylella fastidiosa (strain Temecula1 / ATCC 700964).